The primary structure comprises 356 residues: Uroporphyrinogen decarboxylase (356 aa).

Substrate-binding positions include 27-31 (RQAGR), Asp-77, Tyr-154, Thr-209, and His-327.

It belongs to the uroporphyrinogen decarboxylase family. In terms of assembly, homodimer.

It localises to the cytoplasm. The enzyme catalyses uroporphyrinogen III + 4 H(+) = coproporphyrinogen III + 4 CO2. It participates in porphyrin-containing compound metabolism; protoporphyrin-IX biosynthesis; coproporphyrinogen-III from 5-aminolevulinate: step 4/4. Catalyzes the decarboxylation of four acetate groups of uroporphyrinogen-III to yield coproporphyrinogen-III. The protein is Uroporphyrinogen decarboxylase of Cellvibrio japonicus (strain Ueda107) (Pseudomonas fluorescens subsp. cellulosa).